The following is a 279-amino-acid chain: ESX-1 secretion-associated protein EspG1 (279 aa).

This sequence belongs to the EspG family. Interacts specifically with ESX-1-dependent PE/PPE proteins.

Its subcellular location is the cytoplasm. In terms of biological role, specific chaperone for cognate PE/PPE proteins. Plays an important role in preventing aggregation of PE/PPE dimers. The polypeptide is ESX-1 secretion-associated protein EspG1 (Mycobacterium marinum (strain ATCC BAA-535 / M)).